A 1031-amino-acid chain; its full sequence is Caprin-2 (1031 aa).

Disordered stretches follow at residues 1 to 27, 364 to 458, 500 to 520, 605 to 658, and 830 to 876; these read MKSA…QSTL, LQEE…SWEN, PKDV…LPKD, DQAS…SSEA, and RSGT…SMTP. Polar residues-rich tracts occupy residues 425–439 and 446–458; these read VSVQ…SWTT and ASVQ…SWEN. Over residues 608–646 the composition is skewed to low complexity; it reads SSGSETEFTTSETPEMVVSPCKPKPASALASPNPPLSKS. Positions 830–853 are enriched in polar residues; that stretch reads RSGTSSGLQANSRAGWSDSSQVSS. Phosphoserine is present on residues S852 and S853. The 135-residue stretch at 897-1031 folds into the C1q domain; it reads PQQMRVAFSA…TFSGYLLYQD (135 aa). D982 and E988 together coordinate Ca(2+).

The protein belongs to the caprin family. In terms of assembly, homotrimer; via C1q domain. Found in a complex with LRP6, CCNY and CDK14 during G2/M stage; CAPRIN2 functions as a scaffold for the complex by binding to CCNY via its N terminus and to CDK14 via its C terminus. Interacts with LRP5. Interacts with LRP6. As to expression, specifically expressed in brain (at protein level).

The protein localises to the cytoplasm. It localises to the cell membrane. Promotes phosphorylation of the Wnt coreceptor LRP6, leading to increased activity of the canonical Wnt signaling pathway. Facilitates constitutive LRP6 phosphorylation by CDK14/CCNY during G2/M stage of the cell cycle, which may potentiate cells for Wnt signaling. May regulate the transport and translation of mRNAs, modulating for instance the expression of proteins involved in synaptic plasticity in neurons. Involved in regulation of growth as erythroblasts shift from a highly proliferative state towards their terminal phase of differentiation. May be involved in apoptosis. The chain is Caprin-2 from Mus musculus (Mouse).